Consider the following 1252-residue polypeptide: DNA-directed RNA polymerase subunit beta (1252 aa).

This sequence belongs to the RNA polymerase beta chain family. The RNAP catalytic core consists of 2 alpha, 1 beta, 1 beta' and 1 omega subunit. When a sigma factor is associated with the core the holoenzyme is formed, which can initiate transcription.

It carries out the reaction RNA(n) + a ribonucleoside 5'-triphosphate = RNA(n+1) + diphosphate. DNA-dependent RNA polymerase catalyzes the transcription of DNA into RNA using the four ribonucleoside triphosphates as substrates. The protein is DNA-directed RNA polymerase subunit beta of Chlamydia trachomatis serovar D (strain ATCC VR-885 / DSM 19411 / UW-3/Cx).